The primary structure comprises 253 residues: Putative tyrosine-protein phosphatase OCA1 (253 aa).

The span at 1–21 (MHRTSIVEELERHQQDQKADQ) shows a compositional bias: basic and acidic residues. The segment at 1-84 (MHRTSIVEEL…PRMKTIVKPP (84 aa)) is disordered. Polar residues predominate over residues 27-65 (SDASNSALQESSDPRLSTTDNTNTPEINVNDQQQEQQVA). Positions 93–249 (NFGPVERNLY…IIVYPESAPE (157 aa)) constitute a Tyrosine-protein phosphatase domain. The Phosphocysteine intermediate role is filled by Cys-186.

The protein belongs to the protein-tyrosine phosphatase family.

Its subcellular location is the cytoplasm. It catalyses the reaction O-phospho-L-tyrosyl-[protein] + H2O = L-tyrosyl-[protein] + phosphate. Functionally, putative tyrosine-protein phosphatase required for protection against superoxide stress. The polypeptide is Putative tyrosine-protein phosphatase OCA1 (OCA1) (Yarrowia lipolytica (strain CLIB 122 / E 150) (Yeast)).